A 323-amino-acid chain; its full sequence is 3-dehydroquinate synthase (323 aa).

Belongs to the archaeal-type DHQ synthase family.

The catalysed reaction is 2-amino-2,3,7-trideoxy-D-lyxo-hept-6-ulosonate + NAD(+) + H2O = 3-dehydroquinate + NH4(+) + NADH + H(+). Its function is as follows. Catalyzes the oxidative deamination and cyclization of 2-amino-3,7-dideoxy-D-threo-hept-6-ulosonic acid (ADH) to yield 3-dehydroquinate (DHQ), which is fed into the canonical shikimic pathway of aromatic amino acid biosynthesis. In Archaeoglobus fulgidus (strain ATCC 49558 / DSM 4304 / JCM 9628 / NBRC 100126 / VC-16), this protein is 3-dehydroquinate synthase.